The following is a 207-amino-acid chain: Ras-related protein Rab-8A (207 aa).

GTP is bound by residues Ser17, Gly18, Val19, Gly20, Lys21, Thr22, Cys23, Ser35, Ser39, and Thr40. Thr22 is a binding site for Mg(2+). Short sequence motifs (switch) lie at residues 31–45 (DAFN…GIDF) and 63–80 (DTAG…YYRG). Mg(2+) contacts are provided by Thr40 and Asp63. Gly66 provides a ligand contact to GTP. At Thr72 the chain carries Phosphothreonine. Positions 121, 122, 124, 152, and 153 each coordinate GTP. 2 positions are modified to phosphoserine: Ser181 and Ser185. Position 204 is a cysteine methyl ester (Cys204). A lipid anchor (S-geranylgeranyl cysteine) is attached at Cys204. The propeptide at 205-207 (VLL) is removed in mature form.

This sequence belongs to the small GTPase superfamily. Rab family. In terms of assembly, interacts (GTP-bound form) with MICALL1; regulates RAB8A association with recycling endosomes. Interacts with MICALL2; competes with RAB13 and is involved in E-cadherin endocytic recycling. Interacts (GTP-bound form) with MICAL1, MICALCL, MICAL3, EHBP1 and EHBP1L1; at least in case of MICAL1, MICALCL, MICAL3 and EHBP1L1 two molecules of RAB8A can bind to one molecule of the effector protein; ternary complexes of RAB8A, RAB13 and either MICAL1 or EHBP1L1 are possible. Interacts with EHD1. Interacts with MAP4K2 and SYTL4. Interacts with SGSM1 and SGSM3. Interacts with RABIF, RIMS2, RPH3A and RPH3A. Interacts with OPTN. Interacts with RAB3IP, RAB3IP functions as guanine exchange factor (GEF). Interacts with MYO5B. Interacts with CIMAP3. Interacts with BIRC6/bruce. Interacts with OCRL. Interacts with AHI1. Interacts with DCDC1. Interacts with LRRK2; interaction facilitates phosphorylation of Thr-72. Interacts with RAB31P, GDI1, GDI2, CHM, CHML, RABGGTA, RABGGTB, TBC1D15 and INPP5B; these interactions are dependent on Thr-72 not being phosphorylated. Interacts with RILPL1 and RILPL2; these interactions are dependent on the phosphorylation of Thr-72 by LRRK2. Interacts with DZIP1; prevents inhibition by the GDP-dissociation inhibitor GDI2. Interacts (in GDP-bound form) with RAB3IP/Rabin8, RAB3IP functions as guanine exchange factor (GEF) towards RAB8A. Interacts (in GDP-bound form) with RPGR, RPGR functions as GEF towards RAB8A. The cofactor is Mg(2+). In terms of processing, phosphorylation of Thr-72 in the switch II region by LRRK2 prevents the association of RAB regulatory proteins, including CHM, CHML and RAB GDP dissociation inhibitors GDI1 and GDI2. Phosphorylation by LRRK2 is required for localization to stressed lysosomes.

The protein resides in the cell membrane. The protein localises to the golgi apparatus. It is found in the endosome membrane. Its subcellular location is the recycling endosome membrane. It localises to the cell projection. The protein resides in the cilium. The protein localises to the cytoplasmic vesicle. It is found in the phagosome membrane. Its subcellular location is the cytoplasm. It localises to the cytoskeleton. The protein resides in the microtubule organizing center. The protein localises to the centrosome. It is found in the centriole. Its subcellular location is the cilium basal body. It localises to the midbody. The protein resides in the lysosome. The enzyme catalyses GTP + H2O = GDP + phosphate + H(+). With respect to regulation, regulated by guanine nucleotide exchange factors (GEFs) such as RAB3IP/Rabin8 and RPGR which promote the exchange of bound GDP for free GTP, GTPase activating proteins (GAPs) which increase the GTP hydrolysis activity, and GDP dissociation inhibitors (GDIs) which inhibit the dissociation of the nucleotide from the GTPase. Activated in response to insulin. Its function is as follows. The small GTPases Rab are key regulators of intracellular membrane trafficking, from the formation of transport vesicles to their fusion with membranes. Rabs cycle between an inactive GDP-bound form and an active GTP-bound form that is able to recruit to membranes different sets of downstream effectors directly responsible for vesicle formation, movement, tethering and fusion. RAB8A is involved in polarized vesicular trafficking and neurotransmitter release. Together with RAB11A, RAB3IP, the exocyst complex, PARD3, PRKCI, ANXA2, CDC42 and DNMBP promotes transcytosis of PODXL to the apical membrane initiation sites (AMIS), apical surface formation and lumenogenesis. Regulates the compacted morphology of the Golgi. Together with MYO5B and RAB11A participates in epithelial cell polarization. Also involved in membrane trafficking to the cilium and ciliogenesis. Together with MICALL2, may also regulate adherens junction assembly. May play a role in insulin-induced transport to the plasma membrane of the glucose transporter GLUT4 and therefore play a role in glucose homeostasis. Involved in autophagy. Participates in the export of a subset of neosynthesized proteins through a Rab8-Rab10-Rab11-dependent endososomal export route. Targeted to and stabilized on stressed lysosomes through LRRK2 phosphorylation. Suppresses stress-induced lysosomal enlargement through EHBP1 and EHNP1L1 effector proteins. The chain is Ras-related protein Rab-8A (RAB8A) from Canis lupus familiaris (Dog).